The primary structure comprises 328 residues: Spermatogenesis- and oogenesis-specific basic helix-loop-helix-containing protein 1 (328 aa).

One can recognise a bHLH domain in the interval 53–104 (SCLRRNVISERERRKRMSLSCERLRALLPQFDGRREDMASVLEMSVQFLRLA). Positions 290–328 (EAGSALGSDVDDGTSFLLTAGPSSWPGEWGPGFRAGPPA) are disordered. Positions 310-321 (GPSSWPGEWGPG) are enriched in low complexity.

In terms of assembly, forms both hetero- and homodimers with SOHLH2.

The protein localises to the cytoplasm. It is found in the nucleus. Functionally, transcription regulator of both male and female germline differentiation. Suppresses genes involved in spermatogonial stem cells maintenance, and induces genes important for spermatogonial differentiation. Coordinates oocyte differentiation without affecting meiosis I. The protein is Spermatogenesis- and oogenesis-specific basic helix-loop-helix-containing protein 1 (SOHLH1) of Homo sapiens (Human).